The sequence spans 1548 residues: Dual oxidase 2 (1548 aa).

An N-terminal signal peptide occupies residues 1-25 (MLRARPEALMLLGALLTGSLGPSGN). Residues 26 to 601 (QDALSLPWEV…EGSSPGFAIT (576 aa)) lie on the Extracellular side of the membrane. Residues 30-596 (SLPWEVQRYD…VLDFFEGSSP (567 aa)) form a peroxidase-like; mediates peroxidase activity region. 5 N-linked (GlcNAc...) asparagine glycosylation sites follow: Asn-100, Asn-348, Asn-382, Asn-455, and Asn-537. Cys-124 and Cys-1162 are joined by a disulfide. The chain crosses the membrane as a helical span at residues 602-622 (IIALCCLPLVSLLLSGVVAYF). Residues 623-1041 (RGREHKKLQK…KRFVENYRRH (419 aa)) lie on the Cytoplasmic side of the membrane. 3 consecutive EF-hand domains span residues 819 to 854 (PQDM…FMKG), 855 to 890 (SPED…FIEI), and 899 to 934 (QLAE…HDSE). Positions 832, 834, 836, 838, 843, 868, 870, 872, and 879 each coordinate Ca(2+). The interval 960–1245 (ISCRVSFITR…GSYALIQLPT (286 aa)) is interaction with TXNDC11. The segment at 971-991 (PGERSHPQGLGPPAPEAPELG) is disordered. The chain crosses the membrane as a helical span at residues 1042-1062 (IVCVAIFSAICVGVFADRAYY). The Extracellular portion of the chain corresponds to 1063–1076 (YGFASPPSDIAQTT). Residues 1077–1097 (LVGIILSRGTAASVSFMFSYI) form a helical membrane-spanning segment. The 183-residue stretch at 1084 to 1266 (RGTAASVSFM…YGGDKLVSLS (183 aa)) folds into the Ferric oxidoreductase domain. Topologically, residues 1098 to 1128 (LLTMCRNLITFLRETFLNRYVPFDAAVDFHR) are cytoplasmic. Residues 1129-1151 (WIAMAAVVLAILHSAGHAVNVYI) form a helical membrane-spanning segment. Residues 1152–1185 (FSVSPLSLLACIFPNVFVNDGSKLPQKFYWWFFQ) are Extracellular-facing. The chain crosses the membrane as a helical span at residues 1186 to 1206 (TVPGMTGVLLLLVLAIMYVFA). At 1207–1223 (SHHFRRRSFRGFWLTHH) the chain is on the cytoplasmic side. The next 2 helical transmembrane spans lie at 1224–1244 (LYIL…IQLP) and 1245–1265 (TFHI…LVSL). The Cytoplasmic portion of the chain corresponds to 1266–1548 (SRKKVEISVV…AHFMHHYENF (283 aa)). The region spanning 1267–1373 (RKKVEISVVK…DGPFGEGHQE (107 aa)) is the FAD-binding FR-type domain.

The protein in the N-terminal section; belongs to the peroxidase family. In terms of assembly, heterodimer with DUOXA2; disulfide-linked. Interacts with TXNDC11, TPO and CYBA. In terms of processing, N-glycosylated. As to expression, expressed in colon, small intestine, duodenum and tracheal surface epithelial cells (at protein level). Expressed in thyrocytes. Also detected in kidney, liver, lung, pancreas, prostate, salivary glands, rectum and testis.

Its subcellular location is the apical cell membrane. It is found in the cell junction. The enzyme catalyses NADH + O2 + H(+) = H2O2 + NAD(+). It catalyses the reaction NADPH + O2 + H(+) = H2O2 + NADP(+). The protein operates within hormone biosynthesis; thyroid hormone biosynthesis. Peroxidase activity is inhibited by aminobenzohydrazide. The NADPH oxidase activity is calcium-dependent. Functionally, generates hydrogen peroxide which is required for the activity of thyroid peroxidase/TPO and lactoperoxidase/LPO. Plays a role in thyroid hormones synthesis and lactoperoxidase-mediated antimicrobial defense at the surface of mucosa. May have its own peroxidase activity through its N-terminal peroxidase-like domain. The polypeptide is Dual oxidase 2 (DUOX2) (Homo sapiens (Human)).